The chain runs to 148 residues: Natriuretic peptide BF131 (148 aa).

Residues 1-27 form the signal peptide; sequence MVGPSRLAGGGLLLLLLLALLPLALDG. Positions 28–83 are excised as a propeptide; the sequence is KPAPPPQALPKDPAAASAAERIMRALLPDSKSSRPATDRMVHPEHQAGGGDTRRLQ. 2 disordered regions span residues 54–83 and 105–127; these read LPDS…RRLQ and TSDM…PSAA. Residues 63 to 83 show a composition bias toward basic and acidic residues; the sequence is ATDRMVHPEHQAGGGDTRRLQ. An intrachain disulfide couples Cys94 to Cys110. Positions 130-148 are excised as a propeptide; the sequence is AVTWLIRDLRADSKQSRAA.

It belongs to the natriuretic peptide family. As to expression, expressed by the venom gland.

It is found in the secreted. Its function is as follows. Natriuretic peptide that dose-dependently induces the rapid relaxation of rat aortic strips phenylephrine-precontracted. Acts by stimulating cGMP production in a dose-dependent manner (by probably activating NPR1 and/or NPR2). May also show potent hypotensive effects. This chain is Natriuretic peptide BF131, found in Bungarus flaviceps flaviceps (Red-headed krait).